The following is a 79-amino-acid chain: Small ribosomal subunit protein bS18 (79 aa).

The protein belongs to the bacterial ribosomal protein bS18 family. Part of the 30S ribosomal subunit. Forms a tight heterodimer with protein bS6.

Its function is as follows. Binds as a heterodimer with protein bS6 to the central domain of the 16S rRNA, where it helps stabilize the platform of the 30S subunit. The sequence is that of Small ribosomal subunit protein bS18 from Bradyrhizobium diazoefficiens (strain JCM 10833 / BCRC 13528 / IAM 13628 / NBRC 14792 / USDA 110).